Consider the following 171-residue polypeptide: Crossover junction endodeoxyribonuclease RuvC (171 aa).

Active-site residues include D11, E71, and D143. Mg(2+) is bound by residues D11, E71, and D143.

The protein belongs to the RuvC family. Homodimer which binds Holliday junction (HJ) DNA. The HJ becomes 2-fold symmetrical on binding to RuvC with unstacked arms; it has a different conformation from HJ DNA in complex with RuvA. In the full resolvosome a probable DNA-RuvA(4)-RuvB(12)-RuvC(2) complex forms which resolves the HJ. It depends on Mg(2+) as a cofactor.

Its subcellular location is the cytoplasm. The enzyme catalyses Endonucleolytic cleavage at a junction such as a reciprocal single-stranded crossover between two homologous DNA duplexes (Holliday junction).. Its function is as follows. The RuvA-RuvB-RuvC complex processes Holliday junction (HJ) DNA during genetic recombination and DNA repair. Endonuclease that resolves HJ intermediates. Cleaves cruciform DNA by making single-stranded nicks across the HJ at symmetrical positions within the homologous arms, yielding a 5'-phosphate and a 3'-hydroxyl group; requires a central core of homology in the junction. The consensus cleavage sequence is 5'-(A/T)TT(C/G)-3'. Cleavage occurs on the 3'-side of the TT dinucleotide at the point of strand exchange. HJ branch migration catalyzed by RuvA-RuvB allows RuvC to scan DNA until it finds its consensus sequence, where it cleaves and resolves the cruciform DNA. The polypeptide is Crossover junction endodeoxyribonuclease RuvC (Bartonella tribocorum (strain CIP 105476 / IBS 506)).